The following is a 603-amino-acid chain: Myotubularin (603 aa).

Phosphoserine is present on residues Ser-13 and Ser-18. The 69-residue stretch at Gln-29–Gly-97 folds into the GRAM domain. The Myotubularin phosphatase domain occupies Gly-163 to Tyr-538. The a 1,2-diacyl-sn-glycero-3-phospho-(1D-myo-inositol-3,5-bisphosphate) site is built by Asn-288, Asn-313, and Ile-314. The a 1,2-diacyl-sn-glycero-3-phospho-(1D-myo-inositol-3-phosphate) site is built by Asn-288, Asn-313, and Ile-314. Cys-375 functions as the Phosphocysteine intermediate in the catalytic mechanism. 8 residues coordinate a 1,2-diacyl-sn-glycero-3-phospho-(1D-myo-inositol-3,5-bisphosphate): Ser-376, Asp-377, Gly-378, Trp-379, Asp-380, Arg-381, Lys-417, and Arg-421. The a 1,2-diacyl-sn-glycero-3-phospho-(1D-myo-inositol-3-phosphate) site is built by Ser-376, Asp-377, Gly-378, Trp-379, Asp-380, and Arg-381. A 1,2-diacyl-sn-glycero-3-phospho-(1D-myo-inositol-3-phosphate) is bound at residue Arg-421. Position 495 is a phosphothreonine (Thr-495). Ser-588 carries the phosphoserine modification.

Belongs to the protein-tyrosine phosphatase family. Non-receptor class myotubularin subfamily. Heterodimer with MTMR12. Interacts with KMT2A/MLL1 (via SET domain). Interacts with DES in skeletal muscle but not in cardiac muscle. Interacts with SPEG. As to expression, widely expressed with highest levels detected in heart and muscle and low levels in brain (at protein level). Expressed in skeletal muscles (at protein level).

Its subcellular location is the cytoplasm. It localises to the cell membrane. The protein localises to the cell projection. The protein resides in the filopodium. It is found in the ruffle. Its subcellular location is the late endosome. It localises to the myofibril. The protein localises to the sarcomere. It carries out the reaction a 1,2-diacyl-sn-glycero-3-phospho-(1D-myo-inositol-3-phosphate) + H2O = a 1,2-diacyl-sn-glycero-3-phospho-(1D-myo-inositol) + phosphate. It catalyses the reaction a 1,2-diacyl-sn-glycero-3-phospho-(1D-myo-inositol-3,5-bisphosphate) + H2O = a 1,2-diacyl-sn-glycero-3-phospho-(1D-myo-inositol-5-phosphate) + phosphate. The enzyme catalyses 1,2-dioctanoyl-sn-glycero-3-phospho-(1-D-myo-inositol-3-phosphate) + H2O = 1,2-dioctanoyl-sn-glycero-3-phospho-(1D-myo-inositol) + phosphate. The catalysed reaction is 1,2-dioctanoyl-sn-glycero-3-phospho-(1D-myo-inositol-3,5-bisphosphate) + H2O = 1,2-dioctanoyl-sn-glycero-3-phospho-(1D-myo-inositol-5-phosphate) + phosphate. It carries out the reaction 1,2-dihexadecanoyl-sn-glycero-3-phospho-(1D-myo-inositol-3,5-phosphate) + H2O = 1,2-dihexadecanoyl-sn-glycero-3-phospho-(1D-myo-inositol-5-phosphate) + phosphate. Allosterically activated by phosphatidylinositol 5-phosphate (PI5P). Functionally, lipid phosphatase which dephosphorylates phosphatidylinositol 3-monophosphate (PI3P) and phosphatidylinositol 3,5-bisphosphate (PI(3,5)P2). Has also been shown to dephosphorylate phosphotyrosine- and phosphoserine-containing peptides. Negatively regulates EGFR degradation through regulation of EGFR trafficking from the late endosome to the lysosome. Plays a role in vacuolar formation and morphology. Regulates desmin intermediate filament assembly and architecture. Plays a role in mitochondrial morphology and positioning. Required for skeletal muscle maintenance but not for myogenesis. In skeletal muscles, stabilizes MTMR12 protein levels. This chain is Myotubularin, found in Mus musculus (Mouse).